Consider the following 270-residue polypeptide: BPI fold-containing family A member 1 (270 aa).

The signal sequence occupies residues 1–19 (MFLVGSLVVLCGLLAQSTA). Residues 104–109 (LVGGLL) form an important for surfactant activity and antibacterial properties region. The N-linked (GlcNAc...) asparagine glycan is linked to N174. The cysteines at positions 196 and 238 are disulfide-linked.

This sequence belongs to the BPI/LBP/Plunc superfamily. Plunc family. Monomer. Interacts (via N-terminus) with SCNN1B, a subunit of the heterotrimeric epithelial sodium channel (ENaC); this inhibits proteolytic activation of ENaC. Detected in adult nasal epithelium, heart, lung, spleen, testis and salivary gland, and in embryonic nasal epithelium, lung, salivary gland and thymus.

It is found in the secreted. In terms of biological role, lipid-binding protein which shows high specificity for the surfactant phospholipid dipalmitoylphosphatidylcholine (DPPC). Plays a role in the innate immune responses of the upper airways. Reduces the surface tension in secretions from airway epithelia and inhibits the formation of biofilm by pathogenic Gram-negative bacteria, such as P.aeruginosa and K.pneumoniae. Negatively regulates proteolytic cleavage of SCNN1G, an event that is required for activation of the epithelial sodium channel (ENaC), and thereby contributes to airway surface liquid homeostasis and proper clearance of mucus. Plays a role in the airway inflammatory response after exposure to irritants. May attract macrophages and neutrophils. This is BPI fold-containing family A member 1 (Bpifa1) from Rattus norvegicus (Rat).